The following is a 124-amino-acid chain: Small ribosomal subunit protein uS11 (124 aa).

This sequence belongs to the universal ribosomal protein uS11 family. In terms of assembly, part of the 30S ribosomal subunit. Interacts with proteins S7 and S18. Binds to IF-3.

Functionally, located on the platform of the 30S subunit, it bridges several disparate RNA helices of the 16S rRNA. Forms part of the Shine-Dalgarno cleft in the 70S ribosome. The chain is Small ribosomal subunit protein uS11 from Anaplasma phagocytophilum (strain HZ).